We begin with the raw amino-acid sequence, 181 residues long: Mannose-specific lectin (181 aa).

An N-terminal signal peptide occupies residues 1-30 (MGRTTSSPKAMMRIATVAAILTILASTCMA). The Bulb-type lectin domain maps to 31-140 (RNVLTNGEGL…DIWSTGTYRR (110 aa)). Gln-56, Asp-58, Asn-60, Tyr-64, Trp-71, Ala-72, Asn-74, Gln-88, Asp-90, Asn-92, Tyr-96, Val-103, Trp-104, Asn-107, Asn-114, Gln-120, Asp-122, Asn-124, Tyr-128, and Trp-133 together coordinate alpha-D-mannopyranose. A disulfide bridge connects residues Cys-59 and Cys-83.

In terms of assembly, homodimer.

The protein resides in the secreted. Mannose-specific lectin. Shows agglutinating activity towards rabbit erythrocytes. However, it does not show agglutinating activity towards human erythrocytes. Has insecticidal activity against the cotton leafworm S.littoralis and the peach potato aphid M.persicae. Also displays antiviral activity and therefore may contribute to defense against infections. The polypeptide is Mannose-specific lectin (Allium sativum (Garlic)).